The chain runs to 49 residues: Large ribosomal subunit protein bL33B (49 aa).

Belongs to the bacterial ribosomal protein bL33 family.

This Listeria innocua serovar 6a (strain ATCC BAA-680 / CLIP 11262) protein is Large ribosomal subunit protein bL33B (rpmG2).